Consider the following 371-residue polypeptide: uncharacterized protein (371 aa).

Positions 110–140 (MEKFIDFDRCNKCGECARKICKAKWTPLNYL) constitute a 4Fe-4S ferredoxin-type domain.

This is an uncharacterized protein from Methanocaldococcus jannaschii (strain ATCC 43067 / DSM 2661 / JAL-1 / JCM 10045 / NBRC 100440) (Methanococcus jannaschii).